Reading from the N-terminus, the 425-residue chain is Enolase (425 aa).

A (2R)-2-phosphoglycerate-binding site is contributed by glutamine 163. Glutamate 205 functions as the Proton donor in the catalytic mechanism. Mg(2+) contacts are provided by aspartate 242, glutamate 286, and aspartate 313. (2R)-2-phosphoglycerate-binding residues include lysine 338, arginine 367, serine 368, and lysine 389. Lysine 338 acts as the Proton acceptor in catalysis.

The protein belongs to the enolase family. It depends on Mg(2+) as a cofactor.

The protein localises to the cytoplasm. The protein resides in the secreted. It is found in the cell surface. The enzyme catalyses (2R)-2-phosphoglycerate = phosphoenolpyruvate + H2O. Its pathway is carbohydrate degradation; glycolysis; pyruvate from D-glyceraldehyde 3-phosphate: step 4/5. Its function is as follows. Catalyzes the reversible conversion of 2-phosphoglycerate (2-PG) into phosphoenolpyruvate (PEP). It is essential for the degradation of carbohydrates via glycolysis. This chain is Enolase, found in Helicobacter hepaticus (strain ATCC 51449 / 3B1).